The primary structure comprises 352 residues: Ion-translocating oxidoreductase complex subunit D (352 aa).

Transmembrane regions (helical) follow at residues 20-40 (IMLL…WFFG), 42-62 (GTLV…ALVL), 89-109 (IPPL…VIIA), and 123-143 (PAMI…TSWL). Thr-187 bears the FMN phosphoryl threonine mark. A run of 5 helical transmembrane segments spans residues 214-234 (ILAG…GVWL), 242-262 (WHVP…GWLF), 267-287 (LAAP…FFIL), 301-321 (LIFG…GGYP), and 322-342 (DGVA…DYYT).

Belongs to the NqrB/RnfD family. In terms of assembly, the complex is composed of six subunits: RsxA, RsxB, RsxC, RsxD, RsxE and RsxG. The cofactor is FMN.

The protein localises to the cell inner membrane. Functionally, part of a membrane-bound complex that couples electron transfer with translocation of ions across the membrane. Required to maintain the reduced state of SoxR. The protein is Ion-translocating oxidoreductase complex subunit D of Escherichia coli (strain UTI89 / UPEC).